The following is a 303-amino-acid chain: Probable cell division protein WhiA (303 aa).

Residues 272–303 constitute a DNA-binding region (H-T-H motif); sequence SIQQIADSLETPLSKSGVNHRLRKINKIADEL.

Belongs to the WhiA family.

Its function is as follows. Involved in cell division and chromosome segregation. This chain is Probable cell division protein WhiA, found in Streptococcus agalactiae serotype Ia (strain ATCC 27591 / A909 / CDC SS700).